A 425-amino-acid chain; its full sequence is Serine--tRNA ligase (425 aa).

232–234 (TSE) serves as a coordination point for L-serine. Residues 263-265 (RRE) and V279 each bind ATP. Residue E286 participates in L-serine binding. 350-353 (EVVS) contacts ATP. T387 lines the L-serine pocket.

It belongs to the class-II aminoacyl-tRNA synthetase family. Type-1 seryl-tRNA synthetase subfamily. As to quaternary structure, homodimer. The tRNA molecule binds across the dimer.

The protein localises to the cytoplasm. It catalyses the reaction tRNA(Ser) + L-serine + ATP = L-seryl-tRNA(Ser) + AMP + diphosphate + H(+). It carries out the reaction tRNA(Sec) + L-serine + ATP = L-seryl-tRNA(Sec) + AMP + diphosphate + H(+). Its pathway is aminoacyl-tRNA biosynthesis; selenocysteinyl-tRNA(Sec) biosynthesis; L-seryl-tRNA(Sec) from L-serine and tRNA(Sec): step 1/1. Functionally, catalyzes the attachment of serine to tRNA(Ser). Is also able to aminoacylate tRNA(Sec) with serine, to form the misacylated tRNA L-seryl-tRNA(Sec), which will be further converted into selenocysteinyl-tRNA(Sec). The polypeptide is Serine--tRNA ligase (Methanocella arvoryzae (strain DSM 22066 / NBRC 105507 / MRE50)).